A 204-amino-acid polypeptide reads, in one-letter code: Ribonuclease HII (204 aa).

In terms of domain architecture, RNase H type-2 spans 8 to 197 (RLICGVDEAG…VRELLQNPPL (190 aa)). Residues Asp14, Glu15, and Asp106 each coordinate a divalent metal cation.

The protein belongs to the RNase HII family. The cofactor is Mn(2+). It depends on Mg(2+) as a cofactor.

Its subcellular location is the cytoplasm. The catalysed reaction is Endonucleolytic cleavage to 5'-phosphomonoester.. Its function is as follows. Endonuclease that specifically degrades the RNA of RNA-DNA hybrids. The sequence is that of Ribonuclease HII from Azoarcus sp. (strain BH72).